The chain runs to 295 residues: Bifunctional protein FolD (295 aa).

Residues Gly166–Ser168, Ser195, and Ile236 each bind NADP(+).

The protein belongs to the tetrahydrofolate dehydrogenase/cyclohydrolase family. In terms of assembly, homodimer.

The catalysed reaction is (6R)-5,10-methylene-5,6,7,8-tetrahydrofolate + NADP(+) = (6R)-5,10-methenyltetrahydrofolate + NADPH. It catalyses the reaction (6R)-5,10-methenyltetrahydrofolate + H2O = (6R)-10-formyltetrahydrofolate + H(+). Its pathway is one-carbon metabolism; tetrahydrofolate interconversion. Functionally, catalyzes the oxidation of 5,10-methylenetetrahydrofolate to 5,10-methenyltetrahydrofolate and then the hydrolysis of 5,10-methenyltetrahydrofolate to 10-formyltetrahydrofolate. The polypeptide is Bifunctional protein FolD (Chlorobium chlorochromatii (strain CaD3)).